The primary structure comprises 74 residues: ATP synthase subunit 9, mitochondrial (74 aa).

The next 2 helical transmembrane spans lie at 8–28 (IGAG…GNVF) and 50–70 (ILGF…AFLI).

It belongs to the ATPase C chain family. In terms of assembly, F-type ATPases have 2 components, CF(1) - the catalytic core - and CF(0) - the membrane proton channel. CF(1) has five subunits: alpha(3), beta(3), gamma(1), delta(1), epsilon(1). CF(0) has three main subunits: a, b and c.

The protein resides in the mitochondrion membrane. In terms of biological role, this protein is one of the chains of the nonenzymatic membrane component (F0) of mitochondrial ATPase. The sequence is that of ATP synthase subunit 9, mitochondrial (ATP9) from Brassica napus (Rape).